A 927-amino-acid chain; its full sequence is Protein unc-45 homolog B (927 aa).

TPR repeat units lie at residues 4-37 (PVQL…ITDK), 41-74 (AVLY…DASD), and 76-108 (KALF…EPKN). ARM repeat units follow at residues 167–206 (DAGA…GMCT), 209–248 (RARA…NIVD), and 746–785 (DKLR…NLAV).

It localises to the cytoplasm. It is found in the myofibril. The protein localises to the sarcomere. The protein resides in the z line. Its subcellular location is the a band. It localises to the perinuclear region. It is found in the cytosol. Functionally, acts as a co-chaperone for HSP90 and is required for proper folding of the myosin motor domain. Plays a role in sarcomere formation during muscle cell assembly. Is necessary for normal early lens development. The protein is Protein unc-45 homolog B of Xenopus laevis (African clawed frog).